We begin with the raw amino-acid sequence, 237 residues long: MTSEITYAEVRFKNEFKSSGINTASSAASKERTAPHKSNTGFPKLLCASLLIFFLLLAISFFIAFVIFFQKYSQLLEKKTTKELVHTTLECVKKNMPVEETAWSCCPKNWKSFSSNCYFISTESASWQDSEKDCARMEAHLLVINTQEEQDFIFQNLQEESAYFVGLSDPEGQRHWQWVDQTPYNESSTFWHPREPSDPNERCVVLNFRKSPKRWGWNDVNCLGPQRSVCEMMKIHL.

Over 1–48 (MTSEITYAEVRFKNEFKSSGINTASSAASKERTAPHKSNTGFPKLLCA) the chain is Cytoplasmic. The short motif at 5–10 (ITYAEV) is the ITIM motif element. A helical; Signal-anchor for type II membrane protein membrane pass occupies residues 49–69 (SLLIFFLLLAISFFIAFVIFF). The Extracellular portion of the chain corresponds to 70 to 237 (QKYSQLLEKK…SVCEMMKIHL (168 aa)). 3 disulfide bridges follow: cysteine 106–cysteine 117, cysteine 134–cysteine 230, and cysteine 203–cysteine 222. The 119-residue stretch at 113–231 (FSSNCYFIST…CLGPQRSVCE (119 aa)) folds into the C-type lectin domain. Ca(2+)-binding residues include valine 143, asparagine 145, and glutamate 149. The N-linked (GlcNAc...) asparagine glycan is linked to asparagine 185. The Ca(2+) site is built by glutamate 195, serine 197, and glutamate 201. Alpha-D-mannopyranose contacts are provided by residues 195–197 (EPS) and glutamate 201. 207 to 209 (NFR) lines the N-acetyl-D-glucosamine pocket. Residues asparagine 218, aspartate 219, and glutamate 231 each coordinate Ca(2+).

May interact with PTPN6 via its ITIM motif. In terms of tissue distribution, expressed preferentially in hematopoietic tissues. Expressed in all circulating Ag-presenting cells such as dendritic cells, myeloid cells, monocytes, macrophages, B-cells and epidermal Langerhans cells (at protein level). Expressed in peripheral blood leukocytes, neutrophils, moderate quantities in spleen, lymph node, and bone marrow, and at very low levels in thymus.

It localises to the cell membrane. Functionally, C-type lectin receptor that binds carbohydrates mannose and fucose but also weakly interacts with N-acetylglucosamine (GlcNAc) in a Ca(2+)-dependent manner. Involved in regulating immune reactivity. Once triggered by antigen, it is internalized by clathrin-dependent endocytosis and delivers its antigenic cargo into the antigen presentation pathway resulting in cross-priming of CD8(+) T cells. This cross-presentation and cross-priming are enhanced by TLR7 and TLR8 agonists with increased expansion of the CD8(+) T cells, high production of IFNG and TNF with reduced levels of IL4, IL5 and IL13. In plasmacytoid dendritic cells, inhibits TLR9-mediated IFNA and TNF production. May be involved via its ITIM motif (immunoreceptor tyrosine-based inhibitory motifs) in the inhibition of B-cell-receptor-mediated calcium mobilization and protein tyrosine phosphorylation. Its function is as follows. (Microbial infection) Involved in the interaction between HIV-1 virus and dendritic cells. Enhances HIV-1 binding/entry and virus infection. Requires ITIM motif-associated signal transduction pathway involving phosphatases PTPN6 and PTPN11, SYK, Src kinases and MAP kinases. This is C-type lectin domain family 4 member A from Homo sapiens (Human).